A 611-amino-acid polypeptide reads, in one-letter code: Glutamine--fructose-6-phosphate aminotransferase [isomerizing] (611 aa).

Residue C2 is the Nucleophile; for GATase activity of the active site. A Glutamine amidotransferase type-2 domain is found at 2-219; it reads CGIVGAIAER…EGDIAEIRRD (218 aa). 2 consecutive SIS domains span residues 287-427 and 460-601; these read AAEL…VQKR and VSEL…VDQP. K606 (for Fru-6P isomerization activity) is an active-site residue.

In terms of assembly, homodimer.

Its subcellular location is the cytoplasm. The enzyme catalyses D-fructose 6-phosphate + L-glutamine = D-glucosamine 6-phosphate + L-glutamate. Functionally, catalyzes the first step in hexosamine metabolism, converting fructose-6P into glucosamine-6P using glutamine as a nitrogen source. This chain is Glutamine--fructose-6-phosphate aminotransferase [isomerizing], found in Pseudomonas aeruginosa (strain ATCC 15692 / DSM 22644 / CIP 104116 / JCM 14847 / LMG 12228 / 1C / PRS 101 / PAO1).